The primary structure comprises 1029 residues: MNKLVVEIVDASDLMPKDGQGSASPFVEVEFDEQRQRTQTRFKDLNPQWNEKLVFNVGDLKRLNNKTVDVTVYDDRRDNQPGKFLGRVKIAGAVVPLSESESGVQRYPLDKRGLFSNIKGDIALRIYAAPIDGGDFVSPPPDFAEKVMKEDKRFESQEFQFQNQNQNQNHYEQFEDEINNMETLKPTKKKEKESRTFHSIGAHAGGGGGAPPMSQAKQAYPPPPNQPEFRSDFMRAPGPPTGAVMQMQPPRQQNPEFQLIETSPPLAARMRQSYYYRSSGDKTSSTYDLVEQMHYLYVSVVKARDLPVMDVSGSLDPYVEVKLGNYKGLTKHLEKNSNPIWKQIFAFSKERLQSNLLEVTVKDKDLLTKDDFVGRVHIDLTEVPLRVPPDSPLAPQWYRLEDKKGMKTNRGEIMLAVWMGTQADESFPDAWHSDAHRVSHSNLSNTRSKVYFSPKLYYLRIHVMEAQDLVPSDKGRVPDAIVKIQAGNQMRATRTPQMRTMNPQWHEELMFVVSEPFEDMVIVSVDDRIGPGKDEILGRVFIPVRDVPVRQEVGKMPDPRWFNLQRHSMSMEEENEKRKEKFSSKILLRVCIEAGYHVLDESTHFSSDLQPSSKHLRKPSIGILELGILSARNLMPMKGKDGRMTDPYCVAKYGNKWVRTRTLLDALAPKWNEQYTWEVHDPCTVITIGVFDNSHVNDGGDFKDQRIGKVRVRLSTLETDRVYTHFYPLLVLTPGGLKKNGELQLALRYTCTGFVNMMAQYGRPLLPKMHYIQPIPVRHIDLLRHQAMQIVATRLSRSEPPLRREVVEYMLDVDYHMFSLRRSKANFSRIMSLLSSVTLVCKWFNDICTWRNPITTCLVHVLFLILVCYPELILPTVFLYLFVIGMWNYRYRPRHPPHMDARVSQADNAHPDELDEEFDTFPTSRPADIVRMRYDRLRSVGGRVQTVVGDLATQGERIQALLSWRDPRATALFIVFALIWAVFIYVTPFQVIAIIIGLFMLRHPRFRSRMPSVPANFFKRLPAKSDMLL.

The C2 1 domain maps to 1–111; that stretch reads MNKLVVEIVD…SGVQRYPLDK (111 aa). The interval 187–224 is disordered; the sequence is TKKKEKESRTFHSIGAHAGGGGGAPPMSQAKQAYPPPP. C2 domains follow at residues 277 to 398, 437 to 562, and 605 to 727; these read RSSG…PQWY, RVSH…PRWF, and FSSD…THFY. Ca(2+)-binding residues include Asp-310, Asp-316, Asp-363, Asp-365, and Asp-371. 2 helical membrane-spanning segments follow: residues 864 to 884 and 976 to 996; these read LILV…LFVI and FALI…AIII.

It belongs to the MCTP family. The cofactor is Ca(2+). In terms of tissue distribution, expressed in the vascular tissues of cotyledons and rosette leaves. Accumulates in roots caps and shoot apical meristems (SAMs). Observed in flowers.

Its subcellular location is the cell membrane. It is found in the cytoplasm. It localises to the endosome membrane. Functionally, regulates flowering time under long days. May function as a signaling molecule by regulating the trafficking of other regulators. The protein is Multiple C2 domain and transmembrane region protein 6 of Arabidopsis thaliana (Mouse-ear cress).